The primary structure comprises 207 residues: FMN-dependent NADH:quinone oxidoreductase 2 (207 aa).

FMN-binding positions include serine 9, 15–17, and 97–100; these read SAS and MWNF.

It belongs to the azoreductase type 1 family. Homodimer. It depends on FMN as a cofactor.

It carries out the reaction 2 a quinone + NADH + H(+) = 2 a 1,4-benzosemiquinone + NAD(+). It catalyses the reaction N,N-dimethyl-1,4-phenylenediamine + anthranilate + 2 NAD(+) = 2-(4-dimethylaminophenyl)diazenylbenzoate + 2 NADH + 2 H(+). Quinone reductase that provides resistance to thiol-specific stress caused by electrophilic quinones. Its function is as follows. Also exhibits azoreductase activity. Catalyzes the reductive cleavage of the azo bond in aromatic azo compounds to the corresponding amines. The chain is FMN-dependent NADH:quinone oxidoreductase 2 from Burkholderia lata (strain ATCC 17760 / DSM 23089 / LMG 22485 / NCIMB 9086 / R18194 / 383).